The primary structure comprises 278 residues: Ribosomal RNA small subunit methyltransferase A (278 aa).

The S-adenosyl-L-methionine site is built by Asn18, Leu20, Gly45, Glu66, Asp89, and Asn110.

This sequence belongs to the class I-like SAM-binding methyltransferase superfamily. rRNA adenine N(6)-methyltransferase family. RsmA subfamily.

Its subcellular location is the cytoplasm. It catalyses the reaction adenosine(1518)/adenosine(1519) in 16S rRNA + 4 S-adenosyl-L-methionine = N(6)-dimethyladenosine(1518)/N(6)-dimethyladenosine(1519) in 16S rRNA + 4 S-adenosyl-L-homocysteine + 4 H(+). Specifically dimethylates two adjacent adenosines (A1518 and A1519) in the loop of a conserved hairpin near the 3'-end of 16S rRNA in the 30S particle. May play a critical role in biogenesis of 30S subunits. The sequence is that of Ribosomal RNA small subunit methyltransferase A from Cupriavidus pinatubonensis (strain JMP 134 / LMG 1197) (Cupriavidus necator (strain JMP 134)).